A 267-amino-acid chain; its full sequence is Ribosomal RNA small subunit methyltransferase NEP1 (267 aa).

Positions 1–46 (MSELKNGTTEPKKNETTQSDSKSKSTSTNKSSVPPASLVPVQPTAL) are disordered. The span at 16–32 (TTQSDSKSKSTSTNKSS) shows a compositional bias: low complexity. Residues Leu195, Gly222, 227–229 (GKD), and 242–247 (LSDYPL) contribute to the S-adenosyl-L-methionine site.

The protein belongs to the class IV-like SAM-binding methyltransferase superfamily. RNA methyltransferase NEP1 family. As to quaternary structure, homodimer.

The protein resides in the nucleus. It is found in the nucleolus. It carries out the reaction a pseudouridine in rRNA + S-adenosyl-L-methionine = an N(1)-methylpseudouridine in rRNA + S-adenosyl-L-homocysteine + H(+). Functionally, S-adenosyl-L-methionine-dependent pseudouridine N(1)-methyltransferase that methylates the pseudouridine corresponding to position 1189 (Psi1189) in S.cerevisiae 18S rRNA. Involved the biosynthesis of the hypermodified N1-methyl-N3-(3-amino-3-carboxypropyl) pseudouridine (m1acp3-Psi) conserved in eukaryotic 18S rRNA. Also has an essential role in 40S ribosomal subunit biogenesis independent on its methyltransferase activity, facilitating the incorporation of ribosomal protein S19 during the formation of pre-ribosomes. The polypeptide is Ribosomal RNA small subunit methyltransferase NEP1 (Candida albicans (Yeast)).